We begin with the raw amino-acid sequence, 836 residues long: Ethylene receptor 3 (836 aa).

3 helical membrane-spanning segments follow: residues 137-157, 166-186, and 204-224; these read LIAA…AGLR, LVQF…TAFT, and LTAL…PQLL. Cu cation is bound by residues C176 and H180. The region spanning 269 to 413 is the GAF domain; that stretch reads DRHTVLYTTL…VVAGQVAVAL (145 aa). A coiled-coil region spans residues 416–452; it reads ATLLEESRAMRDRLAEQNRELLQARRDALMANEARQA. A Histidine kinase domain is found at 457–691; it reads MSQGMRRPIH…LVLRFQLQSP (235 aa). In terms of domain architecture, Response regulatory spans 718-834; that stretch reads LLIDDDDDIN…LKDELARILQ (117 aa).

It belongs to the ethylene receptor family. Cu cation is required as a cofactor.

The protein localises to the endoplasmic reticulum membrane. It catalyses the reaction ATP + protein L-histidine = ADP + protein N-phospho-L-histidine.. Its function is as follows. Ethylene receptor related to bacterial two-component regulators. Acts as a negative regulator of ethylene signaling. May delay the transition from the vegetative stage to the floral stage by up-regulating GI (GIGANTEA) and RCN1 and cause starch accumulation in stems by down-regulating the alpha-amylase AMY3D. In Oryza sativa subsp. indica (Rice), this protein is Ethylene receptor 3.